The chain runs to 74 residues: Kappa-stichotoxin-Hmg1a (74 aa).

An N-terminal signal peptide occupies residues 1 to 22 (MKSQMIAAVLLIAFCLCVVVTA). Residues 23–39 (RMELQDVEDMENGFQKR) constitute a propeptide that is removed on maturation. In terms of domain architecture, ShKT spans 42–74 (CKDLIPVSECTDIRCRTSMKYRLNLCRKTCGSC). Cystine bridges form between Cys-42–Cys-74, Cys-51–Cys-67, and Cys-56–Cys-71.

The protein belongs to the sea anemone type 1 potassium channel toxin family. Type 1a subfamily.

It is found in the secreted. The protein localises to the nematocyst. Functionally, potently blocks the voltage-gated potassium channel Kv1.1/KCNA1 (Ki=75 pM), KcsA (Ki~1 nM) and moderately blocks Kv1.2/KCNA2 (Ki=2.5 nM) and Kv1.3/KCNA3 (Ki=3.1 nM). Also facilitates acetylcholine release at the avian neuromuscular junction. Blockade and dissociation rate are sensitive to voltage. This chain is Kappa-stichotoxin-Hmg1a, found in Heteractis magnifica (Magnificent sea anemone).